A 332-amino-acid polypeptide reads, in one-letter code: 3'(2'),5'-bisphosphate nucleotidase (332 aa).

Aspartate 49 (proton acceptor) is an active-site residue. Mg(2+) is bound by residues glutamate 73, aspartate 129, isoleucine 131, and aspartate 132. Residue threonine 134 is the Proton acceptor of the active site. Adenosine 3',5'-bisphosphate contacts are provided by threonine 134, serine 245, lysine 248, arginine 262, and aspartate 274. Residues serine 245, lysine 248, arginine 262, and aspartate 274 each coordinate AMP. Aspartate 274 lines the Mg(2+) pocket.

This sequence belongs to the inositol monophosphatase superfamily. It depends on Mg(2+) as a cofactor.

The catalysed reaction is 3'-phosphoadenylyl sulfate + H2O = adenosine 5'-phosphosulfate + phosphate. It catalyses the reaction adenosine 3',5'-bisphosphate + H2O = AMP + phosphate. The enzyme catalyses adenosine 2',5'-bisphosphate + H2O = AMP + phosphate. It carries out the reaction 1D-myo-inositol 1,4-bisphosphate + H2O = 1D-myo-inositol 4-phosphate + phosphate. The catalysed reaction is 1D-myo-inositol 1,3,4-trisphosphate + H2O = 1D-myo-inositol 3,4-bisphosphate + phosphate. Functionally, phosphatase that converts adenosine 3'-phosphate 5'-phosphosulfate (PAPS) to adenosine 5'-phosphosulfate (APS) and 3'(2')-phosphoadenosine 5'-phosphate (PAP) to AMP. Is also able to hydrolyze inositol 1,4-bisphosphate and inositol 1,3,4-trisphosphate. This is 3'(2'),5'-bisphosphate nucleotidase from Dictyostelium discoideum (Social amoeba).